A 441-amino-acid chain; its full sequence is Histone-lysine N-methyltransferase set9 (441 aa).

Positions 108 to 221 (CKFEICSTNQ…PGEEITTFYS (114 aa)) constitute an SET domain.

This sequence belongs to the class V-like SAM-binding methyltransferase superfamily. Histone-lysine methyltransferase family. Suvar4-20 subfamily.

The protein localises to the nucleus. The protein resides in the chromosome. It carries out the reaction L-lysyl(20)-[histone H4] + 3 S-adenosyl-L-methionine = N(6),N(6),N(6)-trimethyl-L-lysyl(20)-[histone H4] + 3 S-adenosyl-L-homocysteine + 3 H(+). Its function is as follows. Histone methyltransferase that specifically trimethylates 'Lys-20' of histone H4 to form H4K20me3. H4 'Lys-20' methylation is apparently not involved in the regulation of gene expression or heterochromatin function but participates in DNA damage response by giving a 'histone mark' required for the recruitment of the checkpoint protein Crb2 to sites of DNA damage. In Schizosaccharomyces pombe (strain 972 / ATCC 24843) (Fission yeast), this protein is Histone-lysine N-methyltransferase set9 (set9).